The chain runs to 358 residues: UPF0324 membrane protein CT0845 (358 aa).

10 helical membrane passes run 36 to 53 (YFPG…ATFL), 57 to 76 (YGAP…RFLS), 83 to 105 (LVGI…GMRI), 115 to 134 (VKPV…FGLA), 146 to 168 (GVLT…AAVL), 178 to 200 (TIFT…PVVA), 244 to 261 (LLRV…SLIF), 276 to 295 (LLPP…SLGV), 307 to 325 (VSRW…KTSL), and 335 to 357 (PVSI…VVWM).

Belongs to the UPF0324 family.

It is found in the cell membrane. This is UPF0324 membrane protein CT0845 from Chlorobaculum tepidum (strain ATCC 49652 / DSM 12025 / NBRC 103806 / TLS) (Chlorobium tepidum).